Consider the following 447-residue polypeptide: Probable glycine dehydrogenase (decarboxylating) subunit 1 (447 aa).

This sequence belongs to the GcvP family. N-terminal subunit subfamily. The glycine cleavage system is composed of four proteins: P, T, L and H. In this organism, the P 'protein' is a heterodimer of two subunits.

It carries out the reaction N(6)-[(R)-lipoyl]-L-lysyl-[glycine-cleavage complex H protein] + glycine + H(+) = N(6)-[(R)-S(8)-aminomethyldihydrolipoyl]-L-lysyl-[glycine-cleavage complex H protein] + CO2. Its function is as follows. The glycine cleavage system catalyzes the degradation of glycine. The P protein binds the alpha-amino group of glycine through its pyridoxal phosphate cofactor; CO(2) is released and the remaining methylamine moiety is then transferred to the lipoamide cofactor of the H protein. This is Probable glycine dehydrogenase (decarboxylating) subunit 1 from Bacillus cytotoxicus (strain DSM 22905 / CIP 110041 / 391-98 / NVH 391-98).